A 219-amino-acid polypeptide reads, in one-letter code: Thiamine-phosphate synthase (219 aa).

4-amino-2-methyl-5-(diphosphooxymethyl)pyrimidine-binding positions include 48 to 52 (QLREK) and N80. D81 and D100 together coordinate Mg(2+). S119 lines the 4-amino-2-methyl-5-(diphosphooxymethyl)pyrimidine pocket. Residue 145-147 (TPT) participates in 2-[(2R,5Z)-2-carboxy-4-methylthiazol-5(2H)-ylidene]ethyl phosphate binding. K148 contributes to the 4-amino-2-methyl-5-(diphosphooxymethyl)pyrimidine binding site. Residues G176 and 196 to 197 (VS) each bind 2-[(2R,5Z)-2-carboxy-4-methylthiazol-5(2H)-ylidene]ethyl phosphate.

Belongs to the thiamine-phosphate synthase family. Requires Mg(2+) as cofactor.

The enzyme catalyses 2-[(2R,5Z)-2-carboxy-4-methylthiazol-5(2H)-ylidene]ethyl phosphate + 4-amino-2-methyl-5-(diphosphooxymethyl)pyrimidine + 2 H(+) = thiamine phosphate + CO2 + diphosphate. It catalyses the reaction 2-(2-carboxy-4-methylthiazol-5-yl)ethyl phosphate + 4-amino-2-methyl-5-(diphosphooxymethyl)pyrimidine + 2 H(+) = thiamine phosphate + CO2 + diphosphate. It carries out the reaction 4-methyl-5-(2-phosphooxyethyl)-thiazole + 4-amino-2-methyl-5-(diphosphooxymethyl)pyrimidine + H(+) = thiamine phosphate + diphosphate. It functions in the pathway cofactor biosynthesis; thiamine diphosphate biosynthesis; thiamine phosphate from 4-amino-2-methyl-5-diphosphomethylpyrimidine and 4-methyl-5-(2-phosphoethyl)-thiazole: step 1/1. Condenses 4-methyl-5-(beta-hydroxyethyl)thiazole monophosphate (THZ-P) and 2-methyl-4-amino-5-hydroxymethyl pyrimidine pyrophosphate (HMP-PP) to form thiamine monophosphate (TMP). This is Thiamine-phosphate synthase from Albidiferax ferrireducens (strain ATCC BAA-621 / DSM 15236 / T118) (Rhodoferax ferrireducens).